A 295-amino-acid polypeptide reads, in one-letter code: uncharacterized protein (295 aa).

Residues 1-13 are compositionally biased toward basic residues; the sequence is MRHSVARPTRLPR. 2 disordered regions span residues 1–111 and 183–295; these read MRHS…AGLS and TSAF…PRDS. Residues 57 to 67 are compositionally biased toward low complexity; sequence AGPSAGAAARP. The segment covering 68–77 has biased composition (pro residues); sequence AAPPPQPREP. 2 stretches are compositionally biased toward basic and acidic residues: residues 245–257 and 280–295; these read LRPK…DRRP and GEPH…PRDS.

This is an uncharacterized protein from Homo sapiens (Human).